The sequence spans 119 residues: Small ribosomal subunit protein uS13 (119 aa).

The interval 96–119 is disordered; the sequence is PVRGQRTKTNARTRKGPRKLIKSR.

Belongs to the universal ribosomal protein uS13 family. In terms of assembly, part of the 30S ribosomal subunit. Forms a loose heterodimer with protein S19. Forms two bridges to the 50S subunit in the 70S ribosome.

In terms of biological role, located at the top of the head of the 30S subunit, it contacts several helices of the 16S rRNA. In the 70S ribosome it contacts the 23S rRNA (bridge B1a) and protein L5 of the 50S subunit (bridge B1b), connecting the 2 subunits; these bridges are implicated in subunit movement. Contacts the tRNAs in the A and P-sites. This chain is Small ribosomal subunit protein uS13, found in Buchnera aphidicola subsp. Cinara cedri (strain Cc).